Reading from the N-terminus, the 261-residue chain is Protein unc-50 homolog (261 aa).

The next 6 membrane-spanning stretches (helical) occupy residues 37 to 57 (IFHYPQMDIEYTFWIMFYLCF), 82 to 102 (AFAVILVFFMAIASMSYAITF), 113 to 133 (VMFWAVFVDFITVGLLIATIG), 166 to 186 (SFFPLFIILYVVQFFLLPILL), 190 to 210 (LFAAILSNTLYIIGFSYYYYV), and 225 to 245 (VVFLYPIGILFALYIVSVVMG).

It belongs to the unc-50 family.

Its subcellular location is the membrane. The sequence is that of Protein unc-50 homolog from Dictyostelium discoideum (Social amoeba).